A 290-amino-acid chain; its full sequence is Diaminopimelate epimerase (290 aa).

Substrate-binding residues include Asn-14 and Asn-67. Cys-76 functions as the Proton donor in the catalytic mechanism. Residues 77 to 78 (GN), Asn-166, Asn-199, and 217 to 218 (ER) each bind substrate. Cys-226 serves as the catalytic Proton acceptor. 227-228 (GT) contributes to the substrate binding site.

Belongs to the diaminopimelate epimerase family. Homodimer.

It localises to the cytoplasm. It carries out the reaction (2S,6S)-2,6-diaminopimelate = meso-2,6-diaminopimelate. It functions in the pathway amino-acid biosynthesis; L-lysine biosynthesis via DAP pathway; DL-2,6-diaminopimelate from LL-2,6-diaminopimelate: step 1/1. In terms of biological role, catalyzes the stereoinversion of LL-2,6-diaminopimelate (L,L-DAP) to meso-diaminopimelate (meso-DAP), a precursor of L-lysine and an essential component of the bacterial peptidoglycan. The protein is Diaminopimelate epimerase of Geobacillus thermodenitrificans (strain NG80-2).